The sequence spans 369 residues: MYFLVADHREHHVIPFLKTDFHHMHQNPIQKNQAFLEIKQLFTGDYLICKSPSTILACIERKTYKDFAASLKDGRYKNRQKMLSLREQTNCQLYFFVEGPAFPNPQKKINHVAYASIITAMTHLMVRDHMFVIQTKNEAHSSQKLVQLFYAFSKEMVCVVPTSLTPTDEELCIKLWSSLSGISGVIGKILANTCSVAHLVSGKLPSQNIDQLKTPSNRPFPKKVKRMLISISKGNKELEIKLLSGVPNIGKKLAAEILKDHALLFFLNQPVECLANIQIAQKTRTIKLGMKRAEAIHYFLNWCGSAHVTVDSQNITKASRPTMQVATQLIATQPAATQPLHDVSDDASSDASSPTGHQTLSKEMSLNTA.

One can recognise an ERCC4 domain in the interval 3–101 (FLVADHREHH…QLYFFVEGPA (99 aa)). Residues 339–369 (PLHDVSDDASSDASSPTGHQTLSKEMSLNTA) form a disordered region. Residues 354–369 (PTGHQTLSKEMSLNTA) are compositionally biased toward polar residues.

It belongs to the asfivirus EP364R family.

Plays a role in the inhibition of type I interferon signaling pathway. Mechanistically, specifically interacts with 2',3'-cGAMP and cleaves it via its phosphodiesterase activity. In turn, prevents 2',3'-cGAMP interaction with host ER-resident STING1 leading to inhibition of downstream signaling pathway and type I interferon production. This is ERCC4 domain-containing protein EP364R from African swine fever virus (isolate Tick/South Africa/Pretoriuskop Pr4/1996) (ASFV).